Reading from the N-terminus, the 199-residue chain is Prolactin (199 aa).

Residues cysteine 4 and cysteine 11 are joined by a disulfide bond. Serine 26, serine 34, and serine 90 each carry phosphoserine. Disulfide bonds link cysteine 58/cysteine 174 and cysteine 191/cysteine 199.

This sequence belongs to the somatotropin/prolactin family. As to quaternary structure, interacts with PRLR.

It localises to the secreted. Functionally, prolactin acts primarily on the mammary gland by promoting lactation. This chain is Prolactin (PRL), found in Loxodonta africana (African elephant).